The following is a 406-amino-acid chain: Probable 2,3-bisphosphoglycerate-independent phosphoglycerate mutase (406 aa).

It belongs to the BPG-independent phosphoglycerate mutase family. A-PGAM subfamily.

The catalysed reaction is (2R)-2-phosphoglycerate = (2R)-3-phosphoglycerate. It functions in the pathway carbohydrate degradation; glycolysis; pyruvate from D-glyceraldehyde 3-phosphate: step 3/5. Catalyzes the interconversion of 2-phosphoglycerate and 3-phosphoglycerate. This is Probable 2,3-bisphosphoglycerate-independent phosphoglycerate mutase from Thermus thermophilus (strain ATCC 27634 / DSM 579 / HB8).